A 262-amino-acid polypeptide reads, in one-letter code: Phycoerythrobilin:ferredoxin oxidoreductase (262 aa).

This sequence belongs to the HY2 family.

It carries out the reaction (3Z)-phycoerythrobilin + oxidized 2[4Fe-4S]-[ferredoxin] = 15,16-dihydrobiliverdin + reduced 2[4Fe-4S]-[ferredoxin] + 2 H(+). Its function is as follows. Catalyzes the two-electron reduction of the C2 and C3(1) diene system of 15,16-dihydrobiliverdin. The protein is Phycoerythrobilin:ferredoxin oxidoreductase (pebB) of Parasynechococcus marenigrum (strain WH8102).